Consider the following 487-residue polypeptide: ATP synthase subunit beta (487 aa).

Residue 164-171 (GGAGVGKT) participates in ATP binding.

The protein belongs to the ATPase alpha/beta chains family. In terms of assembly, F-type ATPases have 2 components, CF(1) - the catalytic core - and CF(0) - the membrane proton channel. CF(1) has five subunits: alpha(3), beta(3), gamma(1), delta(1), epsilon(1). CF(0) has four main subunits: a(1), b(1), b'(1) and c(9-12).

The protein resides in the cellular thylakoid membrane. The catalysed reaction is ATP + H2O + 4 H(+)(in) = ADP + phosphate + 5 H(+)(out). Its function is as follows. Produces ATP from ADP in the presence of a proton gradient across the membrane. The catalytic sites are hosted primarily by the beta subunits. This Synechococcus sp. (strain WH7803) protein is ATP synthase subunit beta.